The sequence spans 227 residues: MSESLIAIVPAAGIGARASLPGEAAVPKQYRPLAGQPMLRHAVRALLADPRIVQVRVAVSAGDGWVEQALAGLPRTVWRPCGGPNRADTVAAALADSGAAADDWILVHDAARPGLPAAALARLIDACLDDAVGGLLALPVADTVKAGRQRVSRTVDRDGLWLAQTPQMFRAGLLRDALARARAAGLAVTDEASAVEAAGHAPRLVAGALRNFKVTWPDDFELMEKWL.

The protein belongs to the IspD/TarI cytidylyltransferase family. IspD subfamily.

The catalysed reaction is 2-C-methyl-D-erythritol 4-phosphate + CTP + H(+) = 4-CDP-2-C-methyl-D-erythritol + diphosphate. It functions in the pathway isoprenoid biosynthesis; isopentenyl diphosphate biosynthesis via DXP pathway; isopentenyl diphosphate from 1-deoxy-D-xylulose 5-phosphate: step 2/6. In terms of biological role, catalyzes the formation of 4-diphosphocytidyl-2-C-methyl-D-erythritol from CTP and 2-C-methyl-D-erythritol 4-phosphate (MEP). This chain is 2-C-methyl-D-erythritol 4-phosphate cytidylyltransferase, found in Bordetella bronchiseptica (strain ATCC BAA-588 / NCTC 13252 / RB50) (Alcaligenes bronchisepticus).